The chain runs to 439 residues: High-energy light unresponsive protein 1 (439 aa).

Residues 1 to 67 (MPPPSSHSNI…LGLNQSIRPN (67 aa)) are Cytoplasmic-facing. Residues 68–88 (NSLLFRIYSWLVFCLLLFTTL) form a helical membrane-spanning segment. Over 89-114 (RKFNQVGVRPNGTRENLQEFFANPRS) the chain is Extracellular. A helical transmembrane segment spans residues 115–135 (MITLCNALIMLSGLLASLQLY). The Cytoplasmic segment spans residues 136–164 (TLGAKRLKPLKILCQFSLNVRTKQAERRQ). The helical transmembrane segment at 165-185 (FMINTFLAVFSGLLALTMAAT) threads the bilayer. Topologically, residues 186–211 (YAMSKWGYILYIVGTPNLDTETIFCV) are extracellular. Residues 212-232 (LLDSYALFVSRAAISALAILF) form a helical membrane-spanning segment. Residues 233-290 (YQHCSVIRRSIKHLINEMVPAEQDECPLPESSLQKIHDCQISYQRIFNGKAVIEEYYS) are Cytoplasmic-facing. Residues 291–311 (FVLFYSYGVCIPIFCFLMFVG) form a helical membrane-spanning segment. The Extracellular segment spans residues 312–324 (MSAQSICWSEVVS). The chain crosses the membrane as a helical span at residues 325–345 (IVIWIVNAILVLLLFSLPAFM). The Cytoplasmic segment spans residues 346–402 (INEDGDRLVASSFRMYHETFHEERDLTVLSQMTFFTFQIHSTKLTLSACNYFYMDRS). Residues 403–423 (ILLSLFSAILTYFLILWEFDI) traverse the membrane as a helical segment. The Extracellular portion of the chain corresponds to 424-439 (KNNQSLQNIANHTIHT).

Belongs to the insect chemoreceptor superfamily. Gustatory receptor (GR) family. As to expression, expressed in the AVG and PVT neurons of the tail.

Its subcellular location is the cell membrane. Functionally, photoreceptor for short wavelength (UV) light that mediates UV-light-induced avoidance behavior. Directly senses and absorbs both UV-A and UV-B light with very high efficiency. Absorption of UV-B but not UV-A light shows resistance to photobleaching. In contrast to other photoreceptors, does not use a prosthetic chromophore to capture photons and only depends on its protein conformation. Might have a role in response to white light exposure. This Caenorhabditis elegans protein is High-energy light unresponsive protein 1.